The primary structure comprises 180 residues: Large ribosomal subunit protein uL6 (180 aa).

Residues 158–180 (YSGKGISYKGEKIRRKEGKTASK) form a disordered region.

This sequence belongs to the universal ribosomal protein uL6 family. Part of the 50S ribosomal subunit.

This protein binds to the 23S rRNA, and is important in its secondary structure. It is located near the subunit interface in the base of the L7/L12 stalk, and near the tRNA binding site of the peptidyltransferase center. In Mycoplasmopsis synoviae (strain 53) (Mycoplasma synoviae), this protein is Large ribosomal subunit protein uL6.